The following is a 187-amino-acid chain: Elongation factor P (187 aa).

It belongs to the elongation factor P family.

The protein resides in the cytoplasm. It functions in the pathway protein biosynthesis; polypeptide chain elongation. In terms of biological role, involved in peptide bond synthesis. Stimulates efficient translation and peptide-bond synthesis on native or reconstituted 70S ribosomes in vitro. Probably functions indirectly by altering the affinity of the ribosome for aminoacyl-tRNA, thus increasing their reactivity as acceptors for peptidyl transferase. In Mycolicibacterium gilvum (strain PYR-GCK) (Mycobacterium gilvum (strain PYR-GCK)), this protein is Elongation factor P.